The chain runs to 178 residues: ATP synthase subunit delta (178 aa).

Belongs to the ATPase delta chain family. F-type ATPases have 2 components, F(1) - the catalytic core - and F(0) - the membrane proton channel. F(1) has five subunits: alpha(3), beta(3), gamma(1), delta(1), epsilon(1). F(0) has three main subunits: a(1), b(2) and c(10-14). The alpha and beta chains form an alternating ring which encloses part of the gamma chain. F(1) is attached to F(0) by a central stalk formed by the gamma and epsilon chains, while a peripheral stalk is formed by the delta and b chains.

The protein resides in the cell inner membrane. In terms of biological role, f(1)F(0) ATP synthase produces ATP from ADP in the presence of a proton or sodium gradient. F-type ATPases consist of two structural domains, F(1) containing the extramembraneous catalytic core and F(0) containing the membrane proton channel, linked together by a central stalk and a peripheral stalk. During catalysis, ATP synthesis in the catalytic domain of F(1) is coupled via a rotary mechanism of the central stalk subunits to proton translocation. This protein is part of the stalk that links CF(0) to CF(1). It either transmits conformational changes from CF(0) to CF(1) or is implicated in proton conduction. This is ATP synthase subunit delta from Hahella chejuensis (strain KCTC 2396).